Consider the following 297-residue polypeptide: F-box only protein 2 (297 aa).

A disordered region spans residues 1 to 42 (MDGDGDPESVGQPEEASPEEQQEEACAEEANGGEERPEDDGE). A compositionally biased stretch (acidic residues) spans 16 to 27 (ASPEEQQEEACA). In terms of domain architecture, F-box spans 45–92 (AAYLDELPEPLLLRVLAELPAAQLVQACRLVCLRWKELVDGAPLWLLK). In terms of domain architecture, FBA spans 114–297 (FYFLSKRRRN…VTNSSVWVEP (184 aa)). A carbohydrate-binding positions include 211–213 (RRD) and 279–280 (YW).

Component of the SCF(FBXO2) complex consisting of CUL1, RBX1, SKP1 and FBXO2. Predominantly detected as heterodimer with SKP1; the heterodimer with SKP1 is not part of the SCF(FBXO2) complex.

The protein resides in the cytoplasm. It localises to the microsome membrane. It participates in protein modification; protein ubiquitination. Substrate recognition component of a SCF (SKP1-CUL1-F-box protein) E3 ubiquitin-protein ligase complex that mediates the ubiquitination and subsequent proteasomal degradation of target proteins. Involved in the endoplasmic reticulum-associated degradation pathway (ERAD) for misfolded lumenal proteins by recognizing and binding sugar chains on unfolded glycoproteins that are retrotranslocated into the cytosol and promoting their ubiquitination and subsequent degradation. Prevents formation of cytosolic aggregates of unfolded glycoproteins that have been retrotranslocated into the cytosol. Able to recognize and bind denatured glycoproteins, preferentially those of the high-mannose type. The polypeptide is F-box only protein 2 (FBXO2) (Bos taurus (Bovine)).